The chain runs to 146 residues: Neutral phospholipase A2 B (146 aa).

The first 21 residues, 1–21 (MNPAHLLILAAVCVSPLGASS), serve as a signal peptide directing secretion. Positions 22–27 (NRPMPL) are excised as a propeptide. 7 disulfide bridges follow: Cys-38–Cys-98, Cys-53–Cys-145, Cys-55–Cys-71, Cys-70–Cys-126, Cys-77–Cys-119, Cys-87–Cys-112, and Cys-105–Cys-117. Ca(2+)-binding residues include Tyr-54, Gly-56, and Gly-58. His-74 is a catalytic residue. Ca(2+) is bound at residue Asp-75. Asp-120 is an active-site residue.

Belongs to the phospholipase A2 family. Group I subfamily. D49 sub-subfamily. Requires Ca(2+) as cofactor. Expressed by the venom gland.

The protein resides in the secreted. The catalysed reaction is a 1,2-diacyl-sn-glycero-3-phosphocholine + H2O = a 1-acyl-sn-glycero-3-phosphocholine + a fatty acid + H(+). PLA2 catalyzes the calcium-dependent hydrolysis of the 2-acyl groups in 3-sn-phosphoglycerides. This chain is Neutral phospholipase A2 B, found in Naja sputatrix (Malayan spitting cobra).